Consider the following 183-residue polypeptide: Archaemetzincin (183 aa).

His-131 provides a ligand contact to Zn(2+). The active-site Proton acceptor is Glu-132. The Zn(2+) site is built by His-135, His-141, Cys-142, Cys-147, and Cys-166.

This sequence belongs to the peptidase M54 family. Monomer. It depends on Zn(2+) as a cofactor.

Its function is as follows. Probable zinc metalloprotease whose natural substrate is unknown. The chain is Archaemetzincin from Saccharolobus solfataricus (strain ATCC 35092 / DSM 1617 / JCM 11322 / P2) (Sulfolobus solfataricus).